The following is a 331-amino-acid chain: Aspartate carbamoyltransferase catalytic subunit (331 aa).

Positions 55 and 56 each coordinate carbamoyl phosphate. Residue Lys84 participates in L-aspartate binding. Carbamoyl phosphate is bound by residues Arg105, His133, and Gln136. Positions 166 and 229 each coordinate L-aspartate. Leu268 and Pro269 together coordinate carbamoyl phosphate.

This sequence belongs to the aspartate/ornithine carbamoyltransferase superfamily. ATCase family. In terms of assembly, heterododecamer (2C3:3R2) of six catalytic PyrB chains organized as two trimers (C3), and six regulatory PyrI chains organized as three dimers (R2).

It catalyses the reaction carbamoyl phosphate + L-aspartate = N-carbamoyl-L-aspartate + phosphate + H(+). It participates in pyrimidine metabolism; UMP biosynthesis via de novo pathway; (S)-dihydroorotate from bicarbonate: step 2/3. Its function is as follows. Catalyzes the condensation of carbamoyl phosphate and aspartate to form carbamoyl aspartate and inorganic phosphate, the committed step in the de novo pyrimidine nucleotide biosynthesis pathway. The protein is Aspartate carbamoyltransferase catalytic subunit of Alkaliphilus oremlandii (strain OhILAs) (Clostridium oremlandii (strain OhILAs)).